Here is a 194-residue protein sequence, read N- to C-terminus: Cysteine and glycine-rich protein 3 (194 aa).

Residues 1-5 (MPNWG) are interaction with TCAP. The region spanning 10–61 (CGACEKTVYHAEEIQCNGRSFHKTCFHCMACRKALDSTTVAAHESEIYCKVC) is the LIM zinc-binding 1 domain. The Nuclear localization signal motif lies at 64–69 (RRYGPK). Residues 94 to 105 (QSPKPARAATTS) are interaction with CLF2. Phosphoserine occurs at positions 95, 111, and 153. In terms of domain architecture, LIM zinc-binding 2 spans 120–171 (CPRCGKSVYAAEKVMGGGKPWHKTCFRCAICGKSLESTNVTDKDGELYCKVC).

Self-associates. Oligomeric in the cytoplasm and monomeric in the nucleus. Homooligomers preferentially form along the actin cytoskeleton. Interacts with TCAP. Interacts with LDHD, MYOD1, MYOG, ACTN2, NRAP, MYF6. Interacts (via N-terminus)D with GLRX3 (via C-terminus) and PPP3CA; GLRX3 and calcineurin compete for interaction with CSRP3. Interacts with CFL2; the stoichiometry influences F-actin depolymerization and possibly two molecules of CFL2 can interact with one molecule of CSRP3 resulting in the highest functional impact; the interaction is stronger with phosphorylated CFL2. Post-translationally, phosphorylated by PKC/PRKCA.

It is found in the nucleus. It localises to the cytoplasm. Its subcellular location is the cytoskeleton. The protein resides in the myofibril. The protein localises to the sarcomere. It is found in the z line. Functionally, positive regulator of myogenesis. Acts as a cofactor for myogenic bHLH transcription factors such as MYOD1, and probably MYOG and MYF6. Enhances the DNA-binding activity of the MYOD1:TCF3 isoform E47 complex and may promote formation of a functional MYOD1:TCF3 isoform E47:MEF2A complex involved in myogenesis. Plays a crucial and specific role in the organization of cytosolic structures in cardiomyocytes. Could play a role in mechanical stretch sensing. May be a scaffold protein that promotes the assembly of interacting proteins at Z-line structures. It is essential for calcineurin anchorage to the Z line. Required for stress-induced calcineurin-NFAT activation. The role in regulation of cytoskeleton dynamics by association with CFL2 is reported conflictingly. Proposed to contribute to the maintenance of muscle cell integrity through an actin-based mechanism. Can directly bind to actin filaments, cross-link actin filaments into bundles without polarity selectivity and protect them from dilution- and cofilin-mediated depolymerization; the function seems to involve its self-association. In vitro can inhibit PKC/PRKCA activity. Proposed to be involved in cardiac stress signaling by down-regulating excessive PKC/PRKCA signaling. This is Cysteine and glycine-rich protein 3 (Csrp3) from Mus musculus (Mouse).